The chain runs to 330 residues: 7,8-didemethyl-8-hydroxy-5-deazariboflavin synthase (330 aa).

Residues 5-245 (VTFSRNVFIP…SDVAVQVAPN (241 aa)) enclose the Radical SAM core domain. The [4Fe-4S] cluster site is built by C19, C23, and C26.

Belongs to the radical SAM superfamily. CofG family. As to quaternary structure, consists of two subunits, CofG and CofH. [4Fe-4S] cluster serves as cofactor.

It carries out the reaction 5-amino-5-(4-hydroxybenzyl)-6-(D-ribitylimino)-5,6-dihydrouracil + S-adenosyl-L-methionine = 7,8-didemethyl-8-hydroxy-5-deazariboflavin + 5'-deoxyadenosine + L-methionine + NH4(+) + H(+). Its pathway is cofactor biosynthesis; coenzyme F0 biosynthesis. In terms of biological role, catalyzes the radical-mediated synthesis of 7,8-didemethyl-8-hydroxy-5-deazariboflavin from 5-amino-5-(4-hydroxybenzyl)-6-(D-ribitylimino)-5,6-dihydrouracil. In Methanococcoides burtonii (strain DSM 6242 / NBRC 107633 / OCM 468 / ACE-M), this protein is 7,8-didemethyl-8-hydroxy-5-deazariboflavin synthase.